Consider the following 124-residue polypeptide: Small ribosomal subunit protein uS12 (124 aa).

Asp-89 carries the post-translational modification 3-methylthioaspartic acid.

Belongs to the universal ribosomal protein uS12 family. As to quaternary structure, part of the 30S ribosomal subunit. Contacts proteins S8 and S17. May interact with IF1 in the 30S initiation complex.

With S4 and S5 plays an important role in translational accuracy. Functionally, interacts with and stabilizes bases of the 16S rRNA that are involved in tRNA selection in the A site and with the mRNA backbone. Located at the interface of the 30S and 50S subunits, it traverses the body of the 30S subunit contacting proteins on the other side and probably holding the rRNA structure together. The combined cluster of proteins S8, S12 and S17 appears to hold together the shoulder and platform of the 30S subunit. In Tolumonas auensis (strain DSM 9187 / NBRC 110442 / TA 4), this protein is Small ribosomal subunit protein uS12.